The sequence spans 262 residues: Adenosylcobinamide-GDP ribazoletransferase (262 aa).

6 helical membrane passes run Tyr43–Gln63, Leu66–Phe86, Gly120–Leu140, Ala146–Phe166, Leu191–Leu211, and Ala242–Leu262.

The protein belongs to the CobS family. Mg(2+) serves as cofactor.

The protein resides in the cell inner membrane. The enzyme catalyses alpha-ribazole + adenosylcob(III)inamide-GDP = adenosylcob(III)alamin + GMP + H(+). The catalysed reaction is alpha-ribazole 5'-phosphate + adenosylcob(III)inamide-GDP = adenosylcob(III)alamin 5'-phosphate + GMP + H(+). Its pathway is cofactor biosynthesis; adenosylcobalamin biosynthesis; adenosylcobalamin from cob(II)yrinate a,c-diamide: step 7/7. In terms of biological role, joins adenosylcobinamide-GDP and alpha-ribazole to generate adenosylcobalamin (Ado-cobalamin). Also synthesizes adenosylcobalamin 5'-phosphate from adenosylcobinamide-GDP and alpha-ribazole 5'-phosphate. The chain is Adenosylcobinamide-GDP ribazoletransferase from Shewanella sp. (strain ANA-3).